The following is a 111-amino-acid chain: MEATAILRGARISPQKARLVAAQVRGLSAESAVNILRFSSKKAACLIKKVVESAIANAENNHGSNIDALKINTIIVDEGRMLKRFMARAKGRSSRIVKRSSHITVVVGPAK.

This sequence belongs to the universal ribosomal protein uL22 family. As to quaternary structure, part of the 50S ribosomal subunit.

This protein binds specifically to 23S rRNA; its binding is stimulated by other ribosomal proteins, e.g. L4, L17, and L20. It is important during the early stages of 50S assembly. It makes multiple contacts with different domains of the 23S rRNA in the assembled 50S subunit and ribosome. Its function is as follows. The globular domain of the protein is located near the polypeptide exit tunnel on the outside of the subunit, while an extended beta-hairpin is found that lines the wall of the exit tunnel in the center of the 70S ribosome. The chain is Large ribosomal subunit protein uL22 from Xylella fastidiosa (strain 9a5c).